We begin with the raw amino-acid sequence, 244 residues long: Fumarate reductase iron-sulfur subunit (244 aa).

Tyr-14 serves as a coordination point for a menaquinone. Residues 16 to 97 form the 2Fe-2S ferredoxin-type domain; that stretch reads PEVDTAPHSA…GMKVEALANF (82 aa). The [2Fe-2S] cluster site is built by Cys-58, Cys-63, Cys-66, and Cys-78. Residues 140 to 169 enclose the 4Fe-4S ferredoxin-type domain; that stretch reads MAKYHQFSGCINCGLCYAACPQFGLNPEFI. [4Fe-4S] cluster is bound by residues Cys-149, Cys-152, and Cys-155. The [3Fe-4S] cluster site is built by Cys-159, Cys-205, and Cys-211. [4Fe-4S] cluster is bound at residue Cys-215. 226–229 contacts a menaquinone; that stretch reads QQGK.

This sequence belongs to the succinate dehydrogenase/fumarate reductase iron-sulfur protein family. In terms of assembly, fumarate dehydrogenase forms part of an enzyme complex containing four subunits: a flavoprotein, an iron-sulfur, and two hydrophobic anchor proteins. Requires [2Fe-2S] cluster as cofactor. [3Fe-4S] cluster serves as cofactor. It depends on [4Fe-4S] cluster as a cofactor.

It is found in the cell inner membrane. The catalysed reaction is a quinone + succinate = fumarate + a quinol. The enzyme catalyses a menaquinone + succinate = a menaquinol + fumarate. Functionally, two distinct, membrane-bound, FAD-containing enzymes are responsible for the catalysis of fumarate and succinate interconversion; the fumarate reductase is used in anaerobic growth, and the succinate dehydrogenase is used in aerobic growth. The protein is Fumarate reductase iron-sulfur subunit (frdB) of Escherichia coli O157:H7.